Consider the following 154-residue polypeptide: MESILESRSGHWAGGPAPGQFYRIPPTPGSIVDPXSVLYGSPITRTQNPMVTGTSVLGVKFEGGVVIAADMLGSYGSLARFRNISRIMRVNNSTMLGASGDYADFQYLKQVLGQMVIDEELLGDGHSYSPKAIHSWLTRAMYNRRFKMNPLWTT.

An N-acetylmethionine modification is found at M1. A propeptide spanning residues 1–45 is cleaved from the precursor; sequence MESILESRSGHWAGGPAPGQFYRIPPTPGSIVDPXSVLYGSPITR. Y102 is modified (phosphotyrosine).

It belongs to the peptidase T1B family. As to quaternary structure, the 26S proteasome consists of a 20S proteasome core and two 19S regulatory subunits. The 20S proteasome core is a barrel-shaped complex made of 28 subunits that are arranged in four stacked rings. The two outer rings are each formed by seven alpha subunits, and the two inner rings are formed by seven beta subunits. The proteolytic activity is exerted by three beta-subunits PSMB5, PSMB6 and PSMB7. Forms a ternary complex with SMAD1 and OAZ1 before PSMB4 is incorporated into the 20S proteasome. Interacts with PRPF19.

The protein localises to the cytoplasm. Its subcellular location is the nucleus. Functionally, non-catalytic component of the 20S core proteasome complex involved in the proteolytic degradation of most intracellular proteins. This complex plays numerous essential roles within the cell by associating with different regulatory particles. Associated with two 19S regulatory particles, forms the 26S proteasome and thus participates in the ATP-dependent degradation of ubiquitinated proteins. The 26S proteasome plays a key role in the maintenance of protein homeostasis by removing misfolded or damaged proteins that could impair cellular functions, and by removing proteins whose functions are no longer required. Associated with the PA200 or PA28, the 20S proteasome mediates ubiquitin-independent protein degradation. This type of proteolysis is required in several pathways including spermatogenesis (20S-PA200 complex) or generation of a subset of MHC class I-presented antigenic peptides (20S-PA28 complex). SMAD1/OAZ1/PSMB4 complex mediates the degradation of the CREBBP/EP300 repressor SNIP1. The protein is Proteasome subunit beta type-4 (PSMB4) of Sus scrofa (Pig).